We begin with the raw amino-acid sequence, 424 residues long: GTPase Obg (424 aa).

An Obg domain is found at 1 to 158; it reads MFIDTAKIFV…RWIKLELKLL (158 aa). One can recognise an OBG-type G domain in the interval 159 to 331; that stretch reads ADVGLIGFPN…LMKEAARLLS (173 aa). GTP-binding positions include 165-172, 190-194, 212-215, 282-285, and 312-314; these read GFPNVGKS, FTTLK, DIPG, NKSD, and SAA. The Mg(2+) site is built by Ser172 and Thr192. Residues 345-424 form the OCT domain; that stretch reads RFIEEEKRFT…LNDFEFDFLL (80 aa).

It belongs to the TRAFAC class OBG-HflX-like GTPase superfamily. OBG GTPase family. In terms of assembly, monomer. The cofactor is Mg(2+).

The protein localises to the cytoplasm. Its function is as follows. An essential GTPase which binds GTP, GDP and possibly (p)ppGpp with moderate affinity, with high nucleotide exchange rates and a fairly low GTP hydrolysis rate. Plays a role in control of the cell cycle, stress response, ribosome biogenesis and in those bacteria that undergo differentiation, in morphogenesis control. This is GTPase Obg from Clostridium botulinum (strain Langeland / NCTC 10281 / Type F).